A 136-amino-acid chain; its full sequence is Cell division protein SepF 3 (136 aa).

The protein belongs to the SepF family. In terms of assembly, homodimer. Interacts with FtsZ.

It is found in the cytoplasm. Its function is as follows. Cell division protein that is part of the divisome complex and is recruited early to the Z-ring. Probably stimulates Z-ring formation, perhaps through the cross-linking of FtsZ protofilaments. Its function overlaps with FtsA. This Streptomyces coelicolor (strain ATCC BAA-471 / A3(2) / M145) protein is Cell division protein SepF 3.